A 96-amino-acid chain; its full sequence is Co-chaperonin GroES (96 aa).

This sequence belongs to the GroES chaperonin family. As to quaternary structure, heptamer of 7 subunits arranged in a ring. Interacts with the chaperonin GroEL.

It localises to the cytoplasm. In terms of biological role, together with the chaperonin GroEL, plays an essential role in assisting protein folding. The GroEL-GroES system forms a nano-cage that allows encapsulation of the non-native substrate proteins and provides a physical environment optimized to promote and accelerate protein folding. GroES binds to the apical surface of the GroEL ring, thereby capping the opening of the GroEL channel. This chain is Co-chaperonin GroES, found in Wolbachia pipientis wMel.